The following is a 163-amino-acid chain: Nitrogen regulatory protein (163 aa).

One can recognise a PTS EIIA type-2 domain in the interval 12 to 156 (SVLNRECTRS…EELYQIITDT (145 aa)). The active-site Tele-phosphohistidine intermediate is the His73.

Its subcellular location is the cytoplasm. Its function is as follows. Seems to have a role in regulating nitrogen assimilation. This is Nitrogen regulatory protein (ptsN) from Escherichia coli (strain K12).